A 624-amino-acid chain; its full sequence is MYAYNGKLLDVDLTREKVKEVELSEDVLKKFYGGRGLGTYILWKELGEKWEKVDPLGEENLLLILTGPLTGYYPGMKTSIVSKSPESNGVVGSVLSSELGLELKAAGYDGIIIRGKAKSPVYLFIHNDTVEIRDATKYWGMGGIELYKTLLKEVHEEIRKKEKLKGVPKEPAMIYIGKGGENKVRFAAIMTKLMHAAGYGGYGAVMGSKNLKAVIAKGSGPLPEVYDKEKMKVLLREFWKELFSMTTFREWGTGAGGYSVGHDRSSEPIRNWQEEYHDNEEISVVNFENRTWIKKYWADYGCPVNCMKISYLRYGPYKGSISDAPDYELQAYMGTNLGIFEPEKIVYLSYLVDELGLDGINTGNILGFAAELYQRGILTKEDLGFELNWGDEKAFAKLLHLIVEKEGIGKILAEGTYRAALKISEIKGIDVTKYAVHVKGIAVGAHGIRSELDYTKDISYAVSVQGGDHTSTAALPAKGYTGELVEAFYDSAVICNFVTKPGFEKIIEFGNALSGFNITPEQWLNEIGLRIIHLQRILLLLGGPDVYWDPRKDDDNPPRFYEPLPSGPVKGKAPNREDIKAKVKQYYEEIGYDEHGIPKEEVLEELGIGEAKREVKRIKKRLNL.

Positions 77, 93, 94, 96, 195, 196, 198, and 199 each coordinate tungstopterin. [4Fe-4S] cluster contacts are provided by D299, C302, and C306. The tungstopterin site is built by D353, L357, D358, G359, T470, D490, I494, C495, and N496. Position 495 (C495) interacts with [4Fe-4S] cluster. The tract at residues 552–575 (KDDDNPPRFYEPLPSGPVKGKAPN) is disordered.

It belongs to the AOR/FOR family. In terms of assembly, heterodimer composed of a small WOR5-S subunit, with four [4Fe-4S] clusters, and a large WOR5-L subunit, containing the active site tungsto-bispyranopterin cofactor as well as another [4Fe-4S] cluster. [4Fe-4S] cluster serves as cofactor. Requires tungstopterin as cofactor.

It is found in the cytoplasm. It catalyses the reaction an aliphatic sulfonate + 4 oxidized [4Fe-4S]-[ferredoxin] + 2 H2O = 4 reduced [4Fe-4S]-[ferredoxin] + a carboxylate + sulfite + 6 H(+). The enzyme catalyses an aliphatic sulfonate + 2 oxidized [4Fe-4S]-[ferredoxin] + H2O = 2 reduced [4Fe-4S]-[ferredoxin] + an aldehyde + sulfite + 3 H(+). The catalysed reaction is 2 oxidized [4Fe-4S]-[ferredoxin] + an aldehyde + H2O = 2 reduced [4Fe-4S]-[ferredoxin] + a carboxylate + 3 H(+). It carries out the reaction 4 oxidized [4Fe-4S]-[ferredoxin] + taurine + 2 H2O = 4 reduced [4Fe-4S]-[ferredoxin] + sulfite + glycine + 6 H(+). It catalyses the reaction 2 oxidized [4Fe-4S]-[ferredoxin] + taurine + H2O = aminoacetaldehyde + 2 reduced [4Fe-4S]-[ferredoxin] + sulfite + 3 H(+). The enzyme catalyses aminoacetaldehyde + 2 oxidized [4Fe-4S]-[ferredoxin] + H2O = 2 reduced [4Fe-4S]-[ferredoxin] + glycine + 3 H(+). Functionally, WOR-like catalytic subunit of an oxidoreductase that can desulfonate and oxidize aliphatic sulfonates such as taurine. The activity involves two steps: an oxidative desulfonation reaction, followed by the activation of a second water molecule and oxidation of the resulting aldehyde. May be involved in the oxidation of various aliphatic sulfonates and also phosphonates. In vitro, has a broad substrate specificity with a high affinity for several substituted and nonsubstituted aliphatic and aromatic aldehydes with various chain lengths, with methyl viologen or benzyl viologen as electron acceptor. Ferredoxin is the physiological electron acceptor. This Pyrococcus furiosus (strain ATCC 43587 / DSM 3638 / JCM 8422 / Vc1) protein is Aliphatic sulfonate oxidoreductase, WOR-like subunit.